The following is a 146-amino-acid chain: Holo-[acyl-carrier-protein] synthase (146 aa).

Mg(2+)-binding residues include Asp9 and Glu63.

The protein belongs to the P-Pant transferase superfamily. AcpS family. Mg(2+) serves as cofactor.

It localises to the cytoplasm. The catalysed reaction is apo-[ACP] + CoA = holo-[ACP] + adenosine 3',5'-bisphosphate + H(+). In terms of biological role, transfers the 4'-phosphopantetheine moiety from coenzyme A to a Ser of acyl-carrier-protein. In Burkholderia multivorans (strain ATCC 17616 / 249), this protein is Holo-[acyl-carrier-protein] synthase.